Consider the following 493-residue polypeptide: Cobyric acid synthase (493 aa).

In terms of domain architecture, GATase cobBQ-type spans 252-443; sequence DLQITVVRLP…LHGLFDNGPW (192 aa). Cys333 (nucleophile) is an active-site residue. The active site involves His435.

The protein belongs to the CobB/CobQ family. CobQ subfamily.

It participates in cofactor biosynthesis; adenosylcobalamin biosynthesis. Functionally, catalyzes amidations at positions B, D, E, and G on adenosylcobyrinic A,C-diamide. NH(2) groups are provided by glutamine, and one molecule of ATP is hydrogenolyzed for each amidation. This chain is Cobyric acid synthase, found in Nostoc sp. (strain PCC 7120 / SAG 25.82 / UTEX 2576).